A 254-amino-acid polypeptide reads, in one-letter code: Alcohol dehydrogenase 2 (254 aa).

Phe-10–Leu-33 serves as a coordination point for NAD(+). Residue Ser-138 participates in substrate binding. Residue Tyr-151 is the Proton acceptor of the active site.

This sequence belongs to the short-chain dehydrogenases/reductases (SDR) family. Homodimer.

It carries out the reaction a primary alcohol + NAD(+) = an aldehyde + NADH + H(+). The catalysed reaction is a secondary alcohol + NAD(+) = a ketone + NADH + H(+). The chain is Alcohol dehydrogenase 2 (Adh2) from Drosophila mojavensis (Fruit fly).